A 642-amino-acid chain; its full sequence is MSPKNKYVYICVEYIYIYFAKIHKQSTLSSDTTKMFVLIDNVLAYLLEQDDLFVTARFAIQGQIVSRRVNKIHISNITDVLLQQFISHTLPYNDNIVPKKILDSMRTAVRQLLEATACVSRECPLVKRSQDIKRARKRLLSDWYRLGADANMDAVLLVVNSAWRFLAVWRPFVNSIQHATQELYQNIAHYLLHGNVNIQRVTALIQLVMGQDDLLFSMDDVLQEVFRIQLYLNKMLPHNSHKWQKPSPFDSANLLLNFRDWTTDNALLQELLLSYPTINKNKHKNHSVPRLIQIWVESYWQDSETTLKDILNFWYSHLAEYYEYQELFADIVQLFINKKRTRQLKIHYIGLTDKEIEENKPPLDYENLFLQYEIDKTNANDELCGATDLSDLLFQWKQGELLEVEAFALNVSPWSLAKTLTLLESSLYLDIETIEFTRHFKHNDTTIDSVFTLSNQLSSYVLETTLQQTHTISYWLQVALSCLYLRNLNSLASIITSLQNHSIERLSLPIDVKSDHLFQRLKVVVHPNNNYNVYRRTIKHIFHSQLPCVPFTSLLIRDITFIRDGNDTFTKDGNNVNMQKFNQITKIVAFAQYLQQKQYEDIHCSNTTARSLLGAMIKVHTLYNDNKDRAYQVSIAKVPRLT.

The N-terminal Ras-GEF domain occupies 224–339 (EVFRIQLYLN…DIVQLFINKK (116 aa)). In terms of domain architecture, Ras-GEF spans 412 to 640 (SPWSLAKTLT…YQVSIAKVPR (229 aa)).

Interacts with AXL2, BEM1, GSP1 and in haploid cells with AXL1.

It localises to the bud neck. The protein resides in the cytoplasm. Its subcellular location is the cell cortex. Functionally, GDP-GTP exchange factor (GEF) for the small GTPase BUD1/RSR1. Regulates the activity of BUD1 together with BUD2 which is a GTPase-activating protein (GAP) of BUD1. Required to produce both the axial and bipolar patterns of bud site selection. Determines the orientation of division axis. Overexpression can suppress mutations in PRP20 which is the GEF for GSP1. May be a cytoplasmic GEF for GSP1. Might also act on the Ras-like protein CDC42. Appears to bind to Ras proteins but not to activate them. In Saccharomyces cerevisiae (strain ATCC 204508 / S288c) (Baker's yeast), this protein is Bud site selection protein 5 (BUD5).